Here is a 350-residue protein sequence, read N- to C-terminus: Pro-cathepsin H (350 aa).

An N-terminal signal peptide occupies residues 1-19 (MAQWTLLIVFFCVATAAAG). A propeptide spans 20–113 (LSFHDSNPIR…WEEFRSHRLG (94 aa)) (activation peptide). The N-linked (GlcNAc...) asparagine glycan is linked to Asn-117. The propeptide at 122–132 (LKGNHRITDVV) is removed in mature form. 2 disulfide bridges follow: Cys-154-Cys-197 and Cys-188-Cys-230. The active site involves Cys-157. Asn-177 carries an N-linked (GlcNAc...) asparagine glycan. The N-linked (GlcNAc...) asparagine glycan is linked to Asn-246. The cysteines at positions 288 and 338 are disulfide-linked. Residues His-297 and Asn-317 contribute to the active site.

It belongs to the peptidase C1 family. As to quaternary structure, interacts with KPI104 and KPI106. Composed of a mini chain and a large chain. The large chain may be split into heavy and light chain. All chains are held together by disulfide bonds.

It is found in the vacuole. The protein resides in the lysosome. It catalyses the reaction Hydrolysis of proteins, acting as an aminopeptidase (notably, cleaving Arg-|-Xaa bonds) as well as an endopeptidase.. Its function is as follows. May play a role in proteolysis leading to mobilization of nitrogen during senescence and starvation. The protein is Pro-cathepsin H of Medicago truncatula (Barrel medic).